Here is a 527-residue protein sequence, read N- to C-terminus: GMP synthase [glutamine-hydrolyzing] (527 aa).

One can recognise a Glutamine amidotransferase type-1 domain in the interval 19-212; sequence KIIVLDYGSQ…AFSICGAKGD (194 aa). The Nucleophile role is filled by Cys-96. Active-site residues include His-186 and Glu-188. The GMPS ATP-PPase domain occupies 213-402; that stretch reads WSMANFVDMQ…LGMPDEVVWR (190 aa). 240–246 is a binding site for ATP; sequence SGGVDSS.

In terms of assembly, homodimer.

It catalyses the reaction XMP + L-glutamine + ATP + H2O = GMP + L-glutamate + AMP + diphosphate + 2 H(+). The protein operates within purine metabolism; GMP biosynthesis; GMP from XMP (L-Gln route): step 1/1. Functionally, catalyzes the synthesis of GMP from XMP. This Streptococcus thermophilus (strain ATCC BAA-250 / LMG 18311) protein is GMP synthase [glutamine-hydrolyzing].